A 255-amino-acid chain; its full sequence is Ribonuclease HII (255 aa).

One can recognise an RNase H type-2 domain in the interval 72 to 255 (AIICGIDEVG…KSFEPIKSLL (184 aa)). Positions 78, 79, and 170 each coordinate a divalent metal cation.

The protein belongs to the RNase HII family. Requires Mn(2+) as cofactor. Mg(2+) is required as a cofactor.

It localises to the cytoplasm. The enzyme catalyses Endonucleolytic cleavage to 5'-phosphomonoester.. In terms of biological role, endonuclease that specifically degrades the RNA of RNA-DNA hybrids. The protein is Ribonuclease HII of Staphylococcus aureus (strain USA300).